The following is a 290-amino-acid chain: Acetyl-coenzyme A carboxylase carboxyl transferase subunit beta (290 aa).

Residues 29–290 (LWGKCPECSQ…RLHGYREKRK (262 aa)) form the CoA carboxyltransferase N-terminal domain. Positions 33, 36, 52, and 55 each coordinate Zn(2+). The C4-type zinc-finger motif lies at 33-55 (CPECSQVVYRKDLLENANVCSNC).

It belongs to the AccD/PCCB family. In terms of assembly, acetyl-CoA carboxylase is a heterohexamer composed of biotin carboxyl carrier protein (AccB), biotin carboxylase (AccC) and two subunits each of ACCase subunit alpha (AccA) and ACCase subunit beta (AccD). The cofactor is Zn(2+).

The protein localises to the cytoplasm. It carries out the reaction N(6)-carboxybiotinyl-L-lysyl-[protein] + acetyl-CoA = N(6)-biotinyl-L-lysyl-[protein] + malonyl-CoA. It functions in the pathway lipid metabolism; malonyl-CoA biosynthesis; malonyl-CoA from acetyl-CoA: step 1/1. Its function is as follows. Component of the acetyl coenzyme A carboxylase (ACC) complex. Biotin carboxylase (BC) catalyzes the carboxylation of biotin on its carrier protein (BCCP) and then the CO(2) group is transferred by the transcarboxylase to acetyl-CoA to form malonyl-CoA. This Prochlorococcus marinus (strain MIT 9211) protein is Acetyl-coenzyme A carboxylase carboxyl transferase subunit beta.